The chain runs to 114 residues: UPF0339 protein PM0519 (114 aa).

Tandem repeats lie at residues 11-59 (AKDG…NFEV) and 62-110 (AKND…IKDL).

It belongs to the UPF0339 family. Duplicated subfamily.

The chain is UPF0339 protein PM0519 from Pasteurella multocida (strain Pm70).